The sequence spans 494 residues: Ketol-acid reductoisomerase (NADP(+)) (494 aa).

Residues 14–208 (LEQLGKCRFM…GGHRAGVLQS (195 aa)) form the KARI N-terminal Rossmann domain. NADP(+)-binding positions include 45-48 (CGAQ), R68, R76, S78, and 108-110 (DKQ). The active site involves H132. G158 serves as a coordination point for NADP(+). KARI C-terminal knotted domains are found at residues 209–344 (SFVA…NAPA) and 345–487 (FDGA…MKDM). Mg(2+) is bound by residues D217, E221, E389, and E393. S414 contacts substrate.

The protein belongs to the ketol-acid reductoisomerase family. The cofactor is Mg(2+).

It carries out the reaction (2R)-2,3-dihydroxy-3-methylbutanoate + NADP(+) = (2S)-2-acetolactate + NADPH + H(+). The catalysed reaction is (2R,3R)-2,3-dihydroxy-3-methylpentanoate + NADP(+) = (S)-2-ethyl-2-hydroxy-3-oxobutanoate + NADPH + H(+). Its pathway is amino-acid biosynthesis; L-isoleucine biosynthesis; L-isoleucine from 2-oxobutanoate: step 2/4. The protein operates within amino-acid biosynthesis; L-valine biosynthesis; L-valine from pyruvate: step 2/4. In terms of biological role, involved in the biosynthesis of branched-chain amino acids (BCAA). Catalyzes an alkyl-migration followed by a ketol-acid reduction of (S)-2-acetolactate (S2AL) to yield (R)-2,3-dihydroxy-isovalerate. In the isomerase reaction, S2AL is rearranged via a Mg-dependent methyl migration to produce 3-hydroxy-3-methyl-2-ketobutyrate (HMKB). In the reductase reaction, this 2-ketoacid undergoes a metal-dependent reduction by NADPH to yield (R)-2,3-dihydroxy-isovalerate. The sequence is that of Ketol-acid reductoisomerase (NADP(+)) from Tolumonas auensis (strain DSM 9187 / NBRC 110442 / TA 4).